A 186-amino-acid polypeptide reads, in one-letter code: Threonylcarbamoyl-AMP synthase (186 aa).

The region spanning 5-186 (LLTIKAAAKL…WEAQTQKRLR (182 aa)) is the YrdC-like domain.

It belongs to the SUA5 family. TsaC subfamily.

It localises to the cytoplasm. The catalysed reaction is L-threonine + hydrogencarbonate + ATP = L-threonylcarbamoyladenylate + diphosphate + H2O. Required for the formation of a threonylcarbamoyl group on adenosine at position 37 (t(6)A37) in tRNAs that read codons beginning with adenine. Catalyzes the conversion of L-threonine, HCO(3)(-)/CO(2) and ATP to give threonylcarbamoyl-AMP (TC-AMP) as the acyladenylate intermediate, with the release of diphosphate. This is Threonylcarbamoyl-AMP synthase from Hydrogenovibrio crunogenus (strain DSM 25203 / XCL-2) (Thiomicrospira crunogena).